Here is a 98-residue protein sequence, read N- to C-terminus: MQFSLALVTLLATAVSALPTEEKRQAYIPCSGLYGTSQCCATDVLGVADLDCGNPPSTPANATDFSAVCSAIGQRARCCVLPILDQGILCNTPTGVQD.

A signal peptide spans 1-17 (MQFSLALVTLLATAVSA). 4 disulfides stabilise this stretch: cysteine 30/cysteine 78, cysteine 39/cysteine 69, cysteine 40/cysteine 52, and cysteine 79/cysteine 90.

It belongs to the cerato-ulmin hydrophobin family.

The protein localises to the secreted. The protein resides in the cell wall. In terms of biological role, aerial growth, conidiation, and dispersal of filamentous fungi in the environment rely upon a capability of their secreting small amphipathic proteins called hydrophobins (HPBs) with low sequence identity. Class I can self-assemble into an outermost layer of rodlet bundles on aerial cell surfaces, conferring cellular hydrophobicity that supports fungal growth, development and dispersal; whereas Class II form highly ordered films at water-air interfaces through intermolecular interactions but contribute nothing to the rodlet structure. Does not seem to be important for the ability to cause seedling disease. This Gibberella moniliformis (Maize ear and stalk rot fungus) protein is Class II hydrophobin 5.